A 103-amino-acid chain; its full sequence is MQKIRKGDKVVVLTGKDKGRTGEVIQVMPKEDRAVVRGVNVVKRHQRQTQNQEAGIITKEAPIHLSNIAIADPKDGKPTRVGFKIDGDKKVRVAKRSGDVIDG.

The protein belongs to the universal ribosomal protein uL24 family. In terms of assembly, part of the 50S ribosomal subunit.

One of two assembly initiator proteins, it binds directly to the 5'-end of the 23S rRNA, where it nucleates assembly of the 50S subunit. Functionally, one of the proteins that surrounds the polypeptide exit tunnel on the outside of the subunit. The polypeptide is Large ribosomal subunit protein uL24 (Sinorhizobium medicae (strain WSM419) (Ensifer medicae)).